The primary structure comprises 422 residues: Mannose-1-phosphate guanylyltransferase regulatory subunit alpha-B (422 aa).

A substrate-binding domain region spans residues 2–253 (LKAIILIGGP…QHFWSQIKSA (252 aa)). GDP-alpha-D-mannose contacts are provided by glutamate 85 and glutamine 249. The interval 275 to 422 (LATNQGGTPK…NRSFKNQIIL (148 aa)) is hexapeptide repeat domain. Residues 358–386 (TPSDPNPNDPYAKIDSETLFRDGGLTPSI) are C-loop.

The protein belongs to the transferase hexapeptide repeat family. Component of the GMPPA-GMPPB mannose-1-phosphate guanylyltransferase complex composed of 4 GMPPA subunits and 8 GMPPB subunits; the complex is organized into three layers, a central layer made up of 2 GMPPA dimers sandwiched between two layers each made up of 2 GMPPB dimers.

It functions in the pathway nucleotide-sugar biosynthesis; GDP-alpha-D-mannose biosynthesis; GDP-alpha-D-mannose from alpha-D-mannose 1-phosphate (GTP route): step 1/1. Its function is as follows. Regulatory subunit of the GMPPA-GMPPB mannose-1-phosphate guanylyltransferase complex; reduces the catalytic activity of GMPPB when part of the complex. Mediates allosteric feedback inhibition of GMPPB catalytic activity upon binding GDP-alpha-D-mannose. Together with GMPPB regulates GDP-alpha-D-mannose levels. One of two paralogs (gmppaa and gmppab) that may have redundant functions. This chain is Mannose-1-phosphate guanylyltransferase regulatory subunit alpha-B (gmppab), found in Danio rerio (Zebrafish).